The primary structure comprises 25 residues: U11-ctenitoxin-Co1b (25 aa).

Cystine bridges form between Cys4–Cys18 and Cys11–Cys22.

As to quaternary structure, monomer. Expressed by the venom gland.

Its subcellular location is the secreted. In terms of biological role, neurotoxin. In Ctenus ornatus (Brazilian spider), this protein is U11-ctenitoxin-Co1b.